The sequence spans 301 residues: Ornithine carbamoyltransferase (301 aa).

Residues 47–50, Gln-74, Arg-98, and 125–128 contribute to the carbamoyl phosphate site; these read STRT and HPCQ. Residues Asn-156, Asp-220, and 224-225 each bind L-ornithine; that span reads SM. Residues 260–261 and Arg-288 each bind carbamoyl phosphate; that span reads CL.

It belongs to the aspartate/ornithine carbamoyltransferase superfamily. OTCase family.

The protein localises to the cytoplasm. The catalysed reaction is carbamoyl phosphate + L-ornithine = L-citrulline + phosphate + H(+). The protein operates within amino-acid biosynthesis; L-arginine biosynthesis; L-arginine from L-ornithine and carbamoyl phosphate: step 1/3. In terms of biological role, reversibly catalyzes the transfer of the carbamoyl group from carbamoyl phosphate (CP) to the N(epsilon) atom of ornithine (ORN) to produce L-citrulline. This Methanobrevibacter smithii (strain ATCC 35061 / DSM 861 / OCM 144 / PS) protein is Ornithine carbamoyltransferase.